The following is a 260-amino-acid chain: 1-(5-phosphoribosyl)-5-[(5-phosphoribosylamino)methylideneamino] imidazole-4-carboxamide isomerase (260 aa).

The active-site Proton acceptor is Asp-8. Asp-130 acts as the Proton donor in catalysis.

The protein belongs to the HisA/HisF family.

It localises to the cytoplasm. It carries out the reaction 1-(5-phospho-beta-D-ribosyl)-5-[(5-phospho-beta-D-ribosylamino)methylideneamino]imidazole-4-carboxamide = 5-[(5-phospho-1-deoxy-D-ribulos-1-ylimino)methylamino]-1-(5-phospho-beta-D-ribosyl)imidazole-4-carboxamide. It participates in amino-acid biosynthesis; L-histidine biosynthesis; L-histidine from 5-phospho-alpha-D-ribose 1-diphosphate: step 4/9. The protein is 1-(5-phosphoribosyl)-5-[(5-phosphoribosylamino)methylideneamino] imidazole-4-carboxamide isomerase of Chlorobaculum parvum (strain DSM 263 / NCIMB 8327) (Chlorobium vibrioforme subsp. thiosulfatophilum).